The following is a 591-amino-acid chain: Alpha-(1-&gt;6)-mannopyranosyltransferase Rv1459c (591 aa).

13 consecutive transmembrane segments (helical) span residues 40-60 (FGATGTVLMAIGALGAGARPV), 80-100 (VSLTMTTTGAVMMALAWLMLG), 117-137 (TLLLWMLPLLIAPPMYSKDVY), 201-221 (IVAAVLCHRLVVLIGVTLIVW), 235-255 (VSALWLGAANPLLIMHLVAGI), 259-279 (ALMLGLMLTGVEFALRGLDMA), 321-341 (EWGPLAMLLAGSILITLSSQV), 367-387 (LLLAAAVMASLTLAIMAILGW), 408-428 (WMSPPTLLALGTGHVGILLGL), 441-461 (AIGVLIITVMVCWLLLAVLRG), 473-493 (LAVTVLLFPVVQPWYLLWAII), 502-522 (PGFRVAAILATLIVGIFGPTA), and 527-547 (FALFQIVDATAASAIIVILLI). Residues 569 to 591 (ESASKTPATRRPTAAPDAYADST) are disordered. The segment covering 574-584 (TPATRRPTAAP) has biased composition (low complexity).

It belongs to the MptA/B family.

It is found in the membrane. Catalyzes the addition of alpha-(1-&gt;6)-mannose residue. The protein is Alpha-(1-&gt;6)-mannopyranosyltransferase Rv1459c of Mycobacterium tuberculosis (strain ATCC 25618 / H37Rv).